The chain runs to 208 residues: Holliday junction branch migration complex subunit RuvA (208 aa).

Residues 1-67 are domain I; it reads MIGWLHGTIG…EDGQQLYGFE (67 aa). The tract at residues 68 to 146 is domain II; sequence TKADRNLFRL…ERWQQQGGST (79 aa). A flexible linker region spans residues 147–157; sequence PLRLVEPVAES. The segment at 157–208 is domain III; the sequence is SRELRATLEALGYGPEEVSAAVAQAGSQGLDPEQPMEEWLRHCLAWLSRQAG.

This sequence belongs to the RuvA family. In terms of assembly, homotetramer. Forms an RuvA(8)-RuvB(12)-Holliday junction (HJ) complex. HJ DNA is sandwiched between 2 RuvA tetramers; dsDNA enters through RuvA and exits via RuvB. An RuvB hexamer assembles on each DNA strand where it exits the tetramer. Each RuvB hexamer is contacted by two RuvA subunits (via domain III) on 2 adjacent RuvB subunits; this complex drives branch migration. In the full resolvosome a probable DNA-RuvA(4)-RuvB(12)-RuvC(2) complex forms which resolves the HJ.

It is found in the cytoplasm. In terms of biological role, the RuvA-RuvB-RuvC complex processes Holliday junction (HJ) DNA during genetic recombination and DNA repair, while the RuvA-RuvB complex plays an important role in the rescue of blocked DNA replication forks via replication fork reversal (RFR). RuvA specifically binds to HJ cruciform DNA, conferring on it an open structure. The RuvB hexamer acts as an ATP-dependent pump, pulling dsDNA into and through the RuvAB complex. HJ branch migration allows RuvC to scan DNA until it finds its consensus sequence, where it cleaves and resolves the cruciform DNA. The protein is Holliday junction branch migration complex subunit RuvA of Synechococcus sp. (strain RCC307).